The sequence spans 310 residues: Putative methyltransferase mtx subunit H (310 aa).

Belongs to the MtrH family. May be part of a complex composed of 3 subunits; MtxA, MtxH and MtxX.

This Methanosarcina mazei (strain ATCC BAA-159 / DSM 3647 / Goe1 / Go1 / JCM 11833 / OCM 88) (Methanosarcina frisia) protein is Putative methyltransferase mtx subunit H (mtxH).